The sequence spans 420 residues: NEDD8-specific protease 1 (420 aa).

The span at 257–281 (KSSDSSETSHESSNSNLKKSSESGS) shows a compositional bias: low complexity. Residues 257-420 (KSSDSSETSH…EELVSGDFPF (164 aa)) are disordered. The span at 286 to 296 (NNHESDKDLHH) shows a compositional bias: basic and acidic residues. Residues 297-310 (EGHHHHHHHHHHHH) are compositionally biased toward basic residues. The span at 311–324 (SHDDDPSSPAEKKQ) shows a compositional bias: basic and acidic residues. Phosphoserine is present on residues S329, S340, and S351. Residues 355-377 (NKEDHLPLLSDEKLDKSAIDKIE) show a composition bias toward basic and acidic residues.

It belongs to the peptidase C48 family. Interacts with csn1. It is, however, not a component of the signalosome.

The protein resides in the cytoplasm. In terms of biological role, protease that catalyzes two essential functions in the NEDD8 pathway: processing of full-length NEDD8 to its mature form and deconjugation of NEDD8 from targeted proteins such as the pcu1, pcu2 and pcu4 cullins and other proteins. The chain is NEDD8-specific protease 1 (nep1) from Schizosaccharomyces pombe (strain 972 / ATCC 24843) (Fission yeast).